Reading from the N-terminus, the 98-residue chain is Aspartyl/glutamyl-tRNA(Asn/Gln) amidotransferase subunit C (98 aa).

The protein belongs to the GatC family. Heterotrimer of A, B and C subunits.

It catalyses the reaction L-glutamyl-tRNA(Gln) + L-glutamine + ATP + H2O = L-glutaminyl-tRNA(Gln) + L-glutamate + ADP + phosphate + H(+). It carries out the reaction L-aspartyl-tRNA(Asn) + L-glutamine + ATP + H2O = L-asparaginyl-tRNA(Asn) + L-glutamate + ADP + phosphate + 2 H(+). Allows the formation of correctly charged Asn-tRNA(Asn) or Gln-tRNA(Gln) through the transamidation of misacylated Asp-tRNA(Asn) or Glu-tRNA(Gln) in organisms which lack either or both of asparaginyl-tRNA or glutaminyl-tRNA synthetases. The reaction takes place in the presence of glutamine and ATP through an activated phospho-Asp-tRNA(Asn) or phospho-Glu-tRNA(Gln). This chain is Aspartyl/glutamyl-tRNA(Asn/Gln) amidotransferase subunit C, found in Acidothermus cellulolyticus (strain ATCC 43068 / DSM 8971 / 11B).